The following is a 373-amino-acid chain: Putative 8-amino-7-oxononanoate synthase (373 aa).

A substrate-binding site is contributed by R18. Pyridoxal 5'-phosphate is bound at residue 93-94 (GF). H118 is a substrate binding site. Residues S166, 191 to 194 (DEAH), and 220 to 223 (TLSK) each bind pyridoxal 5'-phosphate. K223 is subject to N6-(pyridoxal phosphate)lysine. T337 contacts substrate.

Belongs to the class-II pyridoxal-phosphate-dependent aminotransferase family. BioF subfamily. Homodimer. Requires pyridoxal 5'-phosphate as cofactor.

It catalyses the reaction 6-carboxyhexanoyl-[ACP] + L-alanine + H(+) = (8S)-8-amino-7-oxononanoate + holo-[ACP] + CO2. The protein operates within cofactor biosynthesis; biotin biosynthesis. Functionally, catalyzes the decarboxylative condensation of pimeloyl-[acyl-carrier protein] and L-alanine to produce 8-amino-7-oxononanoate (AON), [acyl-carrier protein], and carbon dioxide. This Aquifex aeolicus (strain VF5) protein is Putative 8-amino-7-oxononanoate synthase (bioF).